Reading from the N-terminus, the 153-residue chain is Iron-sulfur cluster assembly scaffold protein IscU 1 (153 aa).

[2Fe-2S] cluster-binding residues include Cys33, Cys58, His101, and Cys102.

The protein belongs to the NifU family. Forms a heterotetramer with IscS2.

Its function is as follows. A scaffold on which IscS assembles Fe-S clusters. Subsequently gives the nascent cluster to other proteins. It is likely that Fe-S cluster coordination is flexible as the role of this complex is to build and then hand off Fe-S clusters. This chain is Iron-sulfur cluster assembly scaffold protein IscU 1 (iscU1), found in Archaeoglobus fulgidus (strain ATCC 49558 / DSM 4304 / JCM 9628 / NBRC 100126 / VC-16).